The chain runs to 326 residues: UDP-N-acetylglucosamine transporter (326 aa).

8 consecutive transmembrane segments (helical) span residues asparagine 4–methionine 24, leucine 38–valine 58, leucine 136–tryptophan 156, phenylalanine 174–phenylalanine 194, leucine 212–valine 232, glutamine 243–isoleucine 263, isoleucine 269–tryptophan 289, and phenylalanine 293–tyrosine 313.

It belongs to the nucleotide-sugar transporter family. SLC35A subfamily. In terms of assembly, interacts with SLC35A2; the interaction is reduced in the presence of SLC35A4. Found in a complex with SLC35A2 and SLC35A4. Interacts with MGAT4B. O-Glcnacylation regulates the stability of SLC35A3 and the specific complex formation with MGAT4B.

The protein resides in the golgi apparatus membrane. The catalysed reaction is UMP(out) + UDP-N-acetyl-alpha-D-glucosamine(in) = UMP(in) + UDP-N-acetyl-alpha-D-glucosamine(out). Transports diphosphate-N-acetylglucosamine (UDP-GlcNAc) from the cytosol into the lumen of the Golgi apparatus, functioning as an antiporter that exchanges UDP-N-acetyl-alpha-D-glucosamine for UMP. May supply UDP-GlcNAc as substrate for Golgi-resident glycosyltransferases that generate highly branched, multiantennary complex N-glycans and keratan sulfate. However, the exact role of SLC35A3 still needs to be elucidated, it could be a member of a catalytically more efficient multiprotein complex rather than function independently as a single transporter. The polypeptide is UDP-N-acetylglucosamine transporter (Slc35a3) (Mus musculus (Mouse)).